The chain runs to 377 residues: MLRLAAAGARAIVDMSYARHFLDFQGSAIPRTMQKLVVTRLSPNFHEAVTLRRDCPVPLPGDGDLLVRNRFVGINASDINYSAGRYDPSLKPPFDIGFEGIGEVVALGLSASARYTVGQAVAYMAPGSFAEYTVVPASIAIPMPSVKPEYLTMLVSGTTAYLSLEELGELSEGKKVLVTAAAGGTGQFAVQLSKIAKCHVIGTCSSDEKAAFLKSIGCDRPINYRTEPVETVLKQEYPEGVDVVYESVGGAMFDLAVDALATKGRLIVIGFISGYQSPTGLSPIKAGVLPTKLLKKSASLRGFFLNHYFSKYQAAMERLLELYARGDLVCEVDLGHLAPDGRFIGLESVFQAVDYMYTGKNTGKLVVELPHPVSSKL.

Residue lysine 35 is modified to N6-acetyllysine. NADP(+) contacts are provided by threonine 185, serine 205, lysine 209, tyrosine 224, serine 247, isoleucine 269, and tyrosine 275. Residue serine 299 is modified to Phosphoserine. NADP(+) is bound by residues 303–305 (FFL) and asparagine 361.

The protein belongs to the zinc-containing alcohol dehydrogenase family. Quinone oxidoreductase subfamily. As to expression, widely expressed.

Its subcellular location is the peroxisome. It catalyses the reaction 13,14-dihydro-15-oxo-prostaglandin E2 + NADP(+) = 15-oxoprostaglandin E2 + NADPH + H(+). It carries out the reaction 13,14-dihydro-15-oxo-prostaglandin E1 + NADP(+) = 15-oxoprostaglandin E1 + NADPH + H(+). The enzyme catalyses 13,14-dihydro-15-oxo-PGF2alpha + NADP(+) = 15-oxoprostaglandin F2alpha + NADPH + H(+). The catalysed reaction is 13,14-dihydro-15-oxo-prostaglandin F1alpha + NADP(+) = 15-oxoprostaglandin F1alpha + NADPH + H(+). In terms of biological role, functions as 15-oxo-prostaglandin 13-reductase and acts on 15-keto-PGE1, 15-keto-PGE2, 15-keto-PGE1-alpha and 15-keto-PGE2-alpha with highest efficiency towards 15-keto-PGE2-alpha. Overexpression represses transcriptional activity of PPARG and inhibits adipocyte differentiation. The protein is Prostaglandin reductase-3 of Mus musculus (Mouse).